The following is a 1046-amino-acid chain: UDP-N-acetylglucosamine--peptide N-acetylglucosaminyltransferase 110 kDa subunit (1046 aa).

At A2 the chain carries N-acetylalanine. Residues S3 and S4 each carry the phosphoserine; by GSK3-beta; alternate modification. O-linked (GlcNAc) serine; alternate glycosylation is found at S3 and S4. Phosphoserine is present on S20. 12 TPR repeats span residues 21–54, 89–122, 123–156, 157–190, 191–224, 225–258, 259–292, 293–326, 327–360, 361–394, 395–428, and 429–462; these read FQGL…EPDN, AEAY…KPDF, IDGY…NPDL, YCVR…QPNF, AVAW…DPNF, LDAY…SPNH, AVVH…QPHF, PDAY…CPTH, ADSL…FPEF, AAAH…SPTF, ADAY…NPAF, and ADAH…KPDF. The O-linked (GlcNAc) serine; by autocatalysis glycan is linked to S399. Phosphothreonine is present on T454. One copy of the TPR 13; truncated repeat lies at 463–473; that stretch reads PDAYCNLAHCL. Positions 464–466 match the DFP motif motif; sequence DAY. The Nuclear localization signal motif lies at 487-503; sequence KKLVSIVADQLEKNRLP. H508 acts as the Proton acceptor in catalysis. UDP-binding positions include Q849, K852, 906 to 908, 911 to 914, 930 to 932, and D935; these read APK, HVRR, and HTT. Y989 is modified (phosphotyrosine). Residues 991 to 1010 are required for phosphatidylinositol 3,4,5-triphosphate binding; it reads KKIRGKVWKQRISSPLFNTK.

This sequence belongs to the glycosyltransferase 41 family. O-GlcNAc transferase subfamily. In terms of assembly, monomer; may exist in different oligomerization states in cells. Homotrimer, oligomerizes via TPR repeats 6 and 7. Trimerization is not necessary for activity in vitro, however it increases affinity for UDP-GlcNAc. Component of a THAP1/THAP3-HCFC1-OGT complex. Component of the NSL complex at least composed of MOF/KAT8, KANSL1, KANSL2, KANSL3, MCRS1, PHF20, OGT1/OGT, WDR5 and HCFC1. Found in a complex with KIF5B, RHOT1, RHOT2 and TRAK1. Found in a complex composed of at least SINHCAF, SIN3A, HDAC1, SAP30, RBBP4, OGT and TET1. Component of a complex composed of KMT2E/MLL5, OGT and USP7; the complex stabilizes KMT2E/MLL5, preventing KMT2E/MLL5 ubiquitination and proteasomal-mediated degradation. Interacts (via TPRs 1-6) with SIN3A; the interaction mediates transcriptional repression in parallel with histone deacetylase. Interacts (via TPR 5-6) with TET1, TET2 and TET3. Interacts (via TPR repeats 6 and 7) with ATXN10. Interacts with NSD2. Interacts with PROSER1; this interaction mediates TET2 O-GlcNAcylation and stability by promoting the interaction between OGT and TET2. Post-translationally, ubiquitinated by the SCF(FBXO31) complex, leading to its proteasomal degradation. In terms of processing, phosphorylation on Ser-3 or Ser-4 by GSK3-beta positively regulates its activity. Phosphorylation at Thr-454 by AMPK promotes nuclear localization. Glycosylated via autocatalysis; O-GlcNAcylation at Ser-399 promotes nuclear localization.

It is found in the nucleus. The protein resides in the cytoplasm. It carries out the reaction L-seryl-[protein] + UDP-N-acetyl-alpha-D-glucosamine = 3-O-(N-acetyl-beta-D-glucosaminyl)-L-seryl-[protein] + UDP + H(+). The enzyme catalyses L-threonyl-[protein] + UDP-N-acetyl-alpha-D-glucosamine = 3-O-(N-acetyl-beta-D-glucosaminyl)-L-threonyl-[protein] + UDP + H(+). It functions in the pathway protein modification; protein glycosylation. Its activity is regulated as follows. Subject to product inhibition by UDP. Functionally, catalyzes the transfer of a single N-acetylglucosamine from UDP-GlcNAc to a serine or threonine residue in cytoplasmic and nuclear proteins resulting in their modification with a beta-linked N-acetylglucosamine (O-GlcNAc). Glycosylates a large and diverse number of proteins including histone H2B, AKT1, AMPK, ATG4B, CAPRIN1, EZH2, FNIP1, GSDMD, KRT7, LMNA, LMNB1, LMNB2, RPTOR, HOXA1, PFKL, KMT2E/MLL5, MAPT/TAU, TET2, RBL2, RET, NOD2 and HCFC1. Can regulate their cellular processes via cross-talk between glycosylation and phosphorylation or by affecting proteolytic processing. Involved in insulin resistance in muscle and adipocyte cells via glycosylating insulin signaling components and inhibiting the 'Thr-308' phosphorylation of AKT1, enhancing IRS1 phosphorylation and attenuating insulin signaling. Involved in glycolysis regulation by mediating glycosylation of 6-phosphofructokinase PFKL, inhibiting its activity. Plays a key role in chromatin structure by mediating O-GlcNAcylation of 'Ser-112' of histone H2B: recruited to CpG-rich transcription start sites of active genes via its interaction with TET proteins (TET1, TET2 or TET3). As part of the NSL complex indirectly involved in acetylation of nucleosomal histone H4 on several lysine residues. O-GlcNAcylation of 'Ser-75' of EZH2 increases its stability, and facilitating the formation of H3K27me3 by the PRC2/EED-EZH2 complex. Stabilizes KMT2E/MLL5 by mediating its glycosylation, thereby preventing KMT2E/MLL5 ubiquitination. Regulates circadian oscillation of the clock genes and glucose homeostasis in the liver. Stabilizes clock proteins BMAL1 and CLOCK through O-glycosylation, which prevents their ubiquitination and subsequent degradation. Promotes the CLOCK-BMAL1-mediated transcription of genes in the negative loop of the circadian clock such as PER1/2 and CRY1/2. O-glycosylates HCFC1 and regulates its proteolytic processing and transcriptional activity. Component of a THAP1/THAP3-HCFC1-OGT complex that is required for the regulation of the transcriptional activity of RRM1. Regulates mitochondrial motility in neurons by mediating glycosylation of TRAK1. Promotes autophagy by mediating O-glycosylation of ATG4B. Acts as a regulator of mTORC1 signaling by mediating O-glycosylation of RPTOR and FNIP1: O-GlcNAcylation of RPTOR in response to glucose sufficiency promotes activation of the mTORC1 complex. The sequence is that of UDP-N-acetylglucosamine--peptide N-acetylglucosaminyltransferase 110 kDa subunit (OGT) from Sus scrofa (Pig).